A 394-amino-acid polypeptide reads, in one-letter code: Carbamoyl phosphate synthase small chain (394 aa).

The interval 1–188 is CPSase; that stretch reads MIRKERAILA…PLPYAFPTLR (188 aa). Residues S49, G240, and G242 each contribute to the L-glutamine site. A Glutamine amidotransferase type-1 domain is found at 192-379; sequence RVVLMDFGIK…IEEIDAFEGA (188 aa). C267 acts as the Nucleophile in catalysis. Residues L268, Q271, N309, G311, and Y312 each contribute to the L-glutamine site. Residues H352 and E354 contribute to the active site.

It belongs to the CarA family. In terms of assembly, composed of two chains; the small (or glutamine) chain promotes the hydrolysis of glutamine to ammonia, which is used by the large (or ammonia) chain to synthesize carbamoyl phosphate. Tetramer of heterodimers (alpha,beta)4.

The catalysed reaction is hydrogencarbonate + L-glutamine + 2 ATP + H2O = carbamoyl phosphate + L-glutamate + 2 ADP + phosphate + 2 H(+). It catalyses the reaction L-glutamine + H2O = L-glutamate + NH4(+). Its pathway is amino-acid biosynthesis; L-arginine biosynthesis; carbamoyl phosphate from bicarbonate: step 1/1. It participates in pyrimidine metabolism; UMP biosynthesis via de novo pathway; (S)-dihydroorotate from bicarbonate: step 1/3. Its function is as follows. Small subunit of the glutamine-dependent carbamoyl phosphate synthetase (CPSase). CPSase catalyzes the formation of carbamoyl phosphate from the ammonia moiety of glutamine, carbonate, and phosphate donated by ATP, constituting the first step of 2 biosynthetic pathways, one leading to arginine and/or urea and the other to pyrimidine nucleotides. The small subunit (glutamine amidotransferase) binds and cleaves glutamine to supply the large subunit with the substrate ammonia. This Deinococcus geothermalis (strain DSM 11300 / CIP 105573 / AG-3a) protein is Carbamoyl phosphate synthase small chain.